Reading from the N-terminus, the 129-residue chain is Protein UL131A (129 aa).

A signal peptide spans 1–18; it reads MRLCRVWLSVCLCAVVLG.

In terms of assembly, forms the envelope pentamer complex (PC) composed of gH, gL, UL128, UL130, and UL131A. The pentamer interacts with host NRP2. The interaction with gH is important for the formation of UL128, UL130, gH-gL complex.

The protein localises to the virion membrane. In terms of biological role, plays a role in viral entry into host cells. Forms a pentameric complex at the surface of the viral envelope together with gH, gL, UL130 and UL131. This complex is required for entry in epithelial, endothelial and myeloid host cells. Mechanistically, engages host receptor(s) including neurophilin 2/NRP2 to mediate infection. Contributes to the formation of the complex between UL128, UL130 and gH-gL. The polypeptide is Protein UL131A (UL131A) (Human cytomegalovirus (strain Merlin) (HHV-5)).